Here is an 864-residue protein sequence, read N- to C-terminus: Microtubule-associated protein TORTIFOLIA1 (864 aa).

The interval 1 to 26 is disordered; that stretch reads MSTPTTSGSAAKPTRPARSSSLATRS. A compositionally biased stretch (polar residues) spans 17-26; the sequence is ARSSSLATRS. HEAT repeat units follow at residues 76 to 113, 117 to 154, 167 to 204, 208 to 245, and 248 to 285; these read ETLPMFLNCLYDSCSDPKPAVKKECLHLLSYVCSLHCD, AHLTKIIAQIVKRLKDSDSGVRDACRDTIGALSGIYLK, LAVGLFVKPLFEAMGEQNKVVQSGASMCMARMVESAAS, TSFQKLCPRICKLLSNSSFLAKASLLPVVSSLSQVGAI, and QSLESLLESIHDCLGSTDWVTRKAAAETLTALASHSSG. Residues 329 to 353 form a disordered region; sequence DGASDDSKLSASEQLGSEKNGEKRS. Serine 414 carries the phosphoserine modification. Residues 426 to 504 are disordered; it reads NDEEESGLDD…QSEGSFTSNR (79 aa). Residues 439-448 are compositionally biased toward polar residues; it reads MGSSNRLKNT. Over residues 449–459 the composition is skewed to basic and acidic residues; it reads QADDKQVKGRF. The segment covering 489–504 has biased composition (polar residues); the sequence is VSNTDNQSEGSFTSNR. A coiled-coil region spans residues 508 to 561; sequence SAIQRQLLQLERQQTNLMNMLQEFIGGSHDSMVTLEGRVRGLERIVEDMARDLS. The tract at residues 615 to 670 is disordered; the sequence is DDWFIPPHAASRNGQAGPRRSPRSEQYENEHMGNGRRGWDNKASGTIRFGEGPSAR. The span at 636–654 shows a compositional bias: basic and acidic residues; sequence PRSEQYENEHMGNGRRGWD.

In terms of assembly, interacts with WAV3. As to expression, expressed in roots, hypocotyls, stems, flowers, siliques, inflorescences, petioles, cotyledons, and leaves. Particularly present in root tips and shoot meristems.

Its subcellular location is the cytoplasm. The protein localises to the cytoskeleton. In terms of biological role, plant-specific microtubule-associated protein (MAP) that regulates the orientation of cortical microtubules and the direction of organ growth. Determines microtubule organization by modulating microtubule severing. The protein is Microtubule-associated protein TORTIFOLIA1 of Arabidopsis thaliana (Mouse-ear cress).